Here is a 79-residue protein sequence, read N- to C-terminus: Small ribosomal subunit protein uS17 (79 aa).

This sequence belongs to the universal ribosomal protein uS17 family. Part of the 30S ribosomal subunit.

Functionally, one of the primary rRNA binding proteins, it binds specifically to the 5'-end of 16S ribosomal RNA. In Bartonella tribocorum (strain CIP 105476 / IBS 506), this protein is Small ribosomal subunit protein uS17.